Reading from the N-terminus, the 43-residue chain is Peroxidase (43 aa).

This sequence belongs to the peroxidase family. Classical plant (class III) peroxidase subfamily. Requires Ca(2+) as cofactor. Heme b is required as a cofactor.

It catalyses the reaction 2 a phenolic donor + H2O2 = 2 a phenolic radical donor + 2 H2O. Removal of H(2)O(2), oxidation of toxic reductants, biosynthesis and degradation of lignin, suberization, auxin catabolism, response to environmental stresses such as wounding, pathogen attack and oxidative stress. These functions might be dependent on each isozyme/isoform in each plant tissue. This chain is Peroxidase, found in Cynara cardunculus var. scolymus (Globe artichoke).